The chain runs to 86 residues: MPSDSKKPTIIYPCLWDYRVIMTTKDTSTLKELLETYQRPFKLEFKNTSKNAKFYSFNVSMEVSNESERNEIFQKISQLDKVVQTL.

To C.jejuni CJ0253.

This is an uncharacterized protein from Helicobacter pylori (strain ATCC 700392 / 26695) (Campylobacter pylori).